A 430-amino-acid polypeptide reads, in one-letter code: Signal recognition particle receptor FtsY (430 aa).

The segment at 75–95 (DTGELPAVGDDATVPRDSPRH) is disordered. GTP-binding positions include 238 to 245 (GVNGTGKT), 320 to 324 (DTAGR), and 382 to 385 (TKLD).

This sequence belongs to the GTP-binding SRP family. FtsY subfamily. In terms of assembly, part of the signal recognition particle protein translocation system, which is composed of SRP and FtsY.

Its subcellular location is the cell membrane. The protein localises to the cytoplasm. The catalysed reaction is GTP + H2O = GDP + phosphate + H(+). Its function is as follows. Involved in targeting and insertion of nascent membrane proteins into the cytoplasmic membrane. Acts as a receptor for the complex formed by the signal recognition particle (SRP) and the ribosome-nascent chain (RNC). This Mycobacterium leprae (strain TN) protein is Signal recognition particle receptor FtsY.